A 365-amino-acid polypeptide reads, in one-letter code: GTPase Obg (365 aa).

Residues 2-160 form the Obg domain; the sequence is ESFVDEVAIE…KFLRLSLKLL (159 aa). One can recognise an OBG-type G domain in the interval 161-329; it reads ADVGIVGLPN…LLEAMDEAFF (169 aa). GTP-binding positions include 167–174, 192–196, 215–218, 282–285, and 310–312; these read GLPNAGKS, FTTLS, DIPG, NKID, and SAD. Residues S174 and T194 each contribute to the Mg(2+) site.

This sequence belongs to the TRAFAC class OBG-HflX-like GTPase superfamily. OBG GTPase family. In terms of assembly, monomer. Mg(2+) serves as cofactor.

The protein resides in the cytoplasm. Its function is as follows. An essential GTPase which binds GTP, GDP and possibly (p)ppGpp with moderate affinity, with high nucleotide exchange rates and a fairly low GTP hydrolysis rate. Plays a role in control of the cell cycle, stress response, ribosome biogenesis and in those bacteria that undergo differentiation, in morphogenesis control. The chain is GTPase Obg from Leptospira borgpetersenii serovar Hardjo-bovis (strain JB197).